Reading from the N-terminus, the 354-residue chain is UDP-N-acetylglucosamine--N-acetylmuramyl-(pentapeptide) pyrophosphoryl-undecaprenol N-acetylglucosamine transferase 1 (354 aa).

Residues 12–14, R163, S193, and Q287 each bind UDP-N-acetyl-alpha-D-glucosamine; that span reads TAG.

The protein belongs to the glycosyltransferase 28 family. MurG subfamily.

The protein resides in the cell membrane. The enzyme catalyses di-trans,octa-cis-undecaprenyl diphospho-N-acetyl-alpha-D-muramoyl-L-alanyl-D-glutamyl-meso-2,6-diaminopimeloyl-D-alanyl-D-alanine + UDP-N-acetyl-alpha-D-glucosamine = di-trans,octa-cis-undecaprenyl diphospho-[N-acetyl-alpha-D-glucosaminyl-(1-&gt;4)]-N-acetyl-alpha-D-muramoyl-L-alanyl-D-glutamyl-meso-2,6-diaminopimeloyl-D-alanyl-D-alanine + UDP + H(+). It participates in cell wall biogenesis; peptidoglycan biosynthesis. In terms of biological role, cell wall formation. Catalyzes the transfer of a GlcNAc subunit on undecaprenyl-pyrophosphoryl-MurNAc-pentapeptide (lipid intermediate I) to form undecaprenyl-pyrophosphoryl-MurNAc-(pentapeptide)GlcNAc (lipid intermediate II). This Bacillus thuringiensis (strain Al Hakam) protein is UDP-N-acetylglucosamine--N-acetylmuramyl-(pentapeptide) pyrophosphoryl-undecaprenol N-acetylglucosamine transferase 1.